Here is a 621-residue protein sequence, read N- to C-terminus: KIF-binding protein (621 aa).

Residue Ser178 is modified to Phosphoserine.

The protein belongs to the KIF-binding protein family. Interacts with KIF1B; positively regulates KIF1B microtubule motor activity. Interacts with STMN2.

The protein resides in the cytoplasm. It is found in the cytoskeleton. Its function is as follows. Activator of KIF1B plus-end-directed microtubule motor activity. Required for organization of axonal microtubules, and axonal outgrowth and maintenance during peripheral and central nervous system development. The polypeptide is KIF-binding protein (KIFBP) (Bos taurus (Bovine)).